The sequence spans 473 residues: Ribulose bisphosphate carboxylase large chain 3 (473 aa).

2 residues coordinate substrate: Asn-116 and Thr-166. Lys-168 functions as the Proton acceptor in the catalytic mechanism. Lys-170 lines the substrate pocket. The Mg(2+) site is built by Lys-194, Asp-196, and Glu-197. At Lys-194 the chain carries N6-carboxylysine. His-287 serves as the catalytic Proton acceptor. Substrate contacts are provided by Arg-288, His-320, and Ser-372.

This sequence belongs to the RuBisCO large chain family. Type I subfamily. Heterohexadecamer of 8 large chains and 8 small chains. Mg(2+) serves as cofactor.

The enzyme catalyses 2 (2R)-3-phosphoglycerate + 2 H(+) = D-ribulose 1,5-bisphosphate + CO2 + H2O. The catalysed reaction is D-ribulose 1,5-bisphosphate + O2 = 2-phosphoglycolate + (2R)-3-phosphoglycerate + 2 H(+). Functionally, ruBisCO catalyzes two reactions: the carboxylation of D-ribulose 1,5-bisphosphate, the primary event in carbon dioxide fixation, as well as the oxidative fragmentation of the pentose substrate. Both reactions occur simultaneously and in competition at the same active site. This is Ribulose bisphosphate carboxylase large chain 3 from Nitrobacter hamburgensis (strain DSM 10229 / NCIMB 13809 / X14).